We begin with the raw amino-acid sequence, 153 residues long: Ubiquitin-conjugating enzyme E2 ubc-18 (153 aa).

One can recognise a UBC core domain in the interval 2-149 (SATRRLQKEL…AEEHTRKHAE (148 aa)). Cys-86 serves as the catalytic Glycyl thioester intermediate.

The protein belongs to the ubiquitin-conjugating enzyme family. In terms of assembly, interacts with E3 ubiquitin-protein ligase wwp-1. Interacts with RBR-type E3 ubiquitin transferase ari-1.1. As to expression, expressed in neurons localized in the head and tail of adults.

It carries out the reaction S-ubiquitinyl-[E1 ubiquitin-activating enzyme]-L-cysteine + [E2 ubiquitin-conjugating enzyme]-L-cysteine = [E1 ubiquitin-activating enzyme]-L-cysteine + S-ubiquitinyl-[E2 ubiquitin-conjugating enzyme]-L-cysteine.. Functionally, ubiquitin-conjugating enzyme E2. Accepts ubiquitin from the E1 complex and catalyzes its covalent attachment to other proteins. Required for diet restriction-mediated lifespan extension, probably acting as part of a complex with ubiquitin-protein ligase wwp-1. Acts redundantly with lin-35/Rb in the regulation of pharyngeal morphogenesis during embryonic development by negatively regulating the expression of proteins such as sup-35. The sequence is that of Ubiquitin-conjugating enzyme E2 ubc-18 from Caenorhabditis elegans.